The chain runs to 89 residues: Small ribosomal subunit protein uS15 (89 aa).

Belongs to the universal ribosomal protein uS15 family. In terms of assembly, part of the 30S ribosomal subunit. Forms a bridge to the 50S subunit in the 70S ribosome, contacting the 23S rRNA.

In terms of biological role, one of the primary rRNA binding proteins, it binds directly to 16S rRNA where it helps nucleate assembly of the platform of the 30S subunit by binding and bridging several RNA helices of the 16S rRNA. Its function is as follows. Forms an intersubunit bridge (bridge B4) with the 23S rRNA of the 50S subunit in the ribosome. In Chlorobium phaeobacteroides (strain BS1), this protein is Small ribosomal subunit protein uS15.